Here is a 372-residue protein sequence, read N- to C-terminus: Queuine tRNA-ribosyltransferase (372 aa).

Catalysis depends on Asp-92, which acts as the Proton acceptor. Substrate is bound by residues 92-96 (DSGGY), Asp-146, Gln-188, and Gly-215. The RNA binding stretch occupies residues 246-252 (GIGSLRE). The Nucleophile role is filled by Asp-265. Residues 270-274 (TRLGR) form an RNA binding; important for wobble base 34 recognition region. Residues Cys-303, Cys-305, Cys-308, and His-334 each coordinate Zn(2+).

This sequence belongs to the queuine tRNA-ribosyltransferase family. In terms of assembly, homodimer. Within each dimer, one monomer is responsible for RNA recognition and catalysis, while the other monomer binds to the replacement base PreQ1. Zn(2+) serves as cofactor.

It carries out the reaction 7-aminomethyl-7-carbaguanine + guanosine(34) in tRNA = 7-aminomethyl-7-carbaguanosine(34) in tRNA + guanine. The protein operates within tRNA modification; tRNA-queuosine biosynthesis. Catalyzes the base-exchange of a guanine (G) residue with the queuine precursor 7-aminomethyl-7-deazaguanine (PreQ1) at position 34 (anticodon wobble position) in tRNAs with GU(N) anticodons (tRNA-Asp, -Asn, -His and -Tyr). Catalysis occurs through a double-displacement mechanism. The nucleophile active site attacks the C1' of nucleotide 34 to detach the guanine base from the RNA, forming a covalent enzyme-RNA intermediate. The proton acceptor active site deprotonates the incoming PreQ1, allowing a nucleophilic attack on the C1' of the ribose to form the product. After dissociation, two additional enzymatic reactions on the tRNA convert PreQ1 to queuine (Q), resulting in the hypermodified nucleoside queuosine (7-(((4,5-cis-dihydroxy-2-cyclopenten-1-yl)amino)methyl)-7-deazaguanosine). In Prochlorococcus marinus (strain MIT 9215), this protein is Queuine tRNA-ribosyltransferase.